We begin with the raw amino-acid sequence, 243 residues long: 7-cyano-7-deazaguanine synthase (243 aa).

Residue 18 to 28 (FSGGQDSATCL) participates in ATP binding. Residues Cys-206, Cys-221, Cys-224, and Cys-227 each contribute to the Zn(2+) site.

It belongs to the QueC family. Requires Zn(2+) as cofactor.

It catalyses the reaction 7-carboxy-7-deazaguanine + NH4(+) + ATP = 7-cyano-7-deazaguanine + ADP + phosphate + H2O + H(+). It functions in the pathway purine metabolism; 7-cyano-7-deazaguanine biosynthesis. Its function is as follows. Catalyzes the ATP-dependent conversion of 7-carboxy-7-deazaguanine (CDG) to 7-cyano-7-deazaguanine (preQ(0)). The sequence is that of 7-cyano-7-deazaguanine synthase from Methylorubrum extorquens (strain PA1) (Methylobacterium extorquens).